We begin with the raw amino-acid sequence, 159 residues long: Nudix hydrolase DR_1025 (159 aa).

Mg(2+) is bound by residues M1, R14, and S49. ATP is bound at residue 1-6 (MEHDER). The Nudix hydrolase domain occupies 11–144 (VELRAAGVVL…QIRMYQTKLF (134 aa)). ATP is bound at residue 50-51 (GA). The short motif at 50 to 71 (GAVEDGENPQDAAVREACEETG) is the Nudix box element. Residues E53 and E65 each contribute to the Mg(2+) site. Residue 87–89 (FPD) coordinates ATP. Residue R95 participates in Mg(2+) binding.

It belongs to the Nudix hydrolase family. As to quaternary structure, homodimer. Mg(2+) serves as cofactor.

It catalyses the reaction 8-oxo-dGTP + H2O = 8-oxo-dGDP + phosphate + H(+). It carries out the reaction 8-oxo-GTP + H2O = 8-oxo-GDP + phosphate + H(+). The enzyme catalyses P(1),P(4)-bis(5'-adenosyl) tetraphosphate + H2O = AMP + ATP + 2 H(+). In terms of biological role, hydrolase that can act as a nucleoside triphosphatase and a dinucleoside polyphosphate pyrophosphatase. The best substrates are 8-oxo-dGTP and 8-oxo-GTP. Other substrates include Ap4A, dGTP and GTP. May be involved in protection from damage caused by radiation. The protein is Nudix hydrolase DR_1025 of Deinococcus radiodurans (strain ATCC 13939 / DSM 20539 / JCM 16871 / CCUG 27074 / LMG 4051 / NBRC 15346 / NCIMB 9279 / VKM B-1422 / R1).